Reading from the N-terminus, the 320-residue chain is uncharacterized protein (320 aa).

The 120-residue stretch at 13–132 (ALVLKSLLRE…VLYPEIPSPE (120 aa)) folds into the Arf-GAP domain. A C4-type zinc finger spans residues 28–52 (CADCKRNEQPRWASWNLGVFICIRC). 3 disordered regions span residues 153–212 (NTAS…STRQ), 227–261 (RPQV…YGAF), and 284–320 (NVTS…DVWK). The span at 154–176 (TASRSSSAHSVKSTSSATVTNVT) shows a compositional bias: low complexity. Polar residues-rich tracts occupy residues 183-210 (SATT…APST) and 228-244 (PQVS…YQNL). Composition is skewed to low complexity over residues 245 to 257 (PSPV…SSQP) and 295 to 310 (SPVQ…SLDS).

Its subcellular location is the cytoplasm. The protein localises to the golgi apparatus. Its function is as follows. GTPase-activating protein for the ADP ribosylation factor family. This is an uncharacterized protein from Schizosaccharomyces pombe (strain 972 / ATCC 24843) (Fission yeast).